A 206-amino-acid polypeptide reads, in one-letter code: Large ribosomal subunit protein uL4 (206 aa).

Residues 47–75 (GTQSAKTRAEVSGGGIKPWRQKGTGRARQ) are disordered.

This sequence belongs to the universal ribosomal protein uL4 family. Part of the 50S ribosomal subunit.

One of the primary rRNA binding proteins, this protein initially binds near the 5'-end of the 23S rRNA. It is important during the early stages of 50S assembly. It makes multiple contacts with different domains of the 23S rRNA in the assembled 50S subunit and ribosome. Functionally, forms part of the polypeptide exit tunnel. In Clostridium botulinum (strain ATCC 19397 / Type A), this protein is Large ribosomal subunit protein uL4.